We begin with the raw amino-acid sequence, 23 residues long: Fimbrial protein (23 aa).

An intrachain disulfide couples C8 to C21.

It belongs to the N-Me-Phe pilin family. As to quaternary structure, the pili are polar flexible filaments of about 5.4 nanometers diameter and 2.5 micrometers average length; they consist of only a single polypeptide chain arranged in a helical configuration of five subunits per turn in the assembled pilus.

Its subcellular location is the fimbrium. This is Fimbrial protein (pil) from Pseudomonas aeruginosa.